A 347-amino-acid polypeptide reads, in one-letter code: Protein RecA (347 aa).

An ATP-binding site is contributed by 64–71 (GPESSGKT).

The protein belongs to the RecA family.

The protein localises to the cytoplasm. Functionally, can catalyze the hydrolysis of ATP in the presence of single-stranded DNA, the ATP-dependent uptake of single-stranded DNA by duplex DNA, and the ATP-dependent hybridization of homologous single-stranded DNAs. It interacts with LexA causing its activation and leading to its autocatalytic cleavage. This Bacillus velezensis (strain DSM 23117 / BGSC 10A6 / LMG 26770 / FZB42) (Bacillus amyloliquefaciens subsp. plantarum) protein is Protein RecA.